Here is a 196-residue protein sequence, read N- to C-terminus: Imidazoleglycerol-phosphate dehydratase (196 aa).

Belongs to the imidazoleglycerol-phosphate dehydratase family.

The protein localises to the cytoplasm. It catalyses the reaction D-erythro-1-(imidazol-4-yl)glycerol 3-phosphate = 3-(imidazol-4-yl)-2-oxopropyl phosphate + H2O. The protein operates within amino-acid biosynthesis; L-histidine biosynthesis; L-histidine from 5-phospho-alpha-D-ribose 1-diphosphate: step 6/9. This is Imidazoleglycerol-phosphate dehydratase from Dehalococcoides mccartyi (strain CBDB1).